A 216-amino-acid polypeptide reads, in one-letter code: Thymidylate kinase (216 aa).

10-17 (GVDGSGKT) provides a ligand contact to ATP.

The protein belongs to the thymidylate kinase family.

It carries out the reaction dTMP + ATP = dTDP + ADP. Its function is as follows. Phosphorylation of dTMP to form dTDP in both de novo and salvage pathways of dTTP synthesis. The chain is Thymidylate kinase from Pelotomaculum thermopropionicum (strain DSM 13744 / JCM 10971 / SI).